A 560-amino-acid polypeptide reads, in one-letter code: Dihydroxy-acid dehydratase (560 aa).

Mg(2+) is bound at residue Asp78. Cys119 contacts [2Fe-2S] cluster. 2 residues coordinate Mg(2+): Asp120 and Lys121. N6-carboxylysine is present on Lys121. Cys192 serves as a coordination point for [2Fe-2S] cluster. Glu446 is a binding site for Mg(2+). Catalysis depends on Ser472, which acts as the Proton acceptor.

The protein belongs to the IlvD/Edd family. As to quaternary structure, homodimer. Requires [2Fe-2S] cluster as cofactor. Mg(2+) is required as a cofactor.

The catalysed reaction is (2R)-2,3-dihydroxy-3-methylbutanoate = 3-methyl-2-oxobutanoate + H2O. It catalyses the reaction (2R,3R)-2,3-dihydroxy-3-methylpentanoate = (S)-3-methyl-2-oxopentanoate + H2O. The protein operates within amino-acid biosynthesis; L-isoleucine biosynthesis; L-isoleucine from 2-oxobutanoate: step 3/4. It functions in the pathway amino-acid biosynthesis; L-valine biosynthesis; L-valine from pyruvate: step 3/4. Functionally, functions in the biosynthesis of branched-chain amino acids. Catalyzes the dehydration of (2R,3R)-2,3-dihydroxy-3-methylpentanoate (2,3-dihydroxy-3-methylvalerate) into 2-oxo-3-methylpentanoate (2-oxo-3-methylvalerate) and of (2R)-2,3-dihydroxy-3-methylbutanoate (2,3-dihydroxyisovalerate) into 2-oxo-3-methylbutanoate (2-oxoisovalerate), the penultimate precursor to L-isoleucine and L-valine, respectively. The chain is Dihydroxy-acid dehydratase from Anaeromyxobacter dehalogenans (strain 2CP-C).